We begin with the raw amino-acid sequence, 308 residues long: Pseudouridine-5'-phosphate glycosidase (308 aa).

E26 functions as the Proton donor in the catalytic mechanism. 2 residues coordinate substrate: K87 and V107. Position 139 (D139) interacts with Mn(2+). 141 to 143 (SAD) is a binding site for substrate. K160 functions as the Nucleophile in the catalytic mechanism.

This sequence belongs to the pseudouridine-5'-phosphate glycosidase family. Homotrimer. The cofactor is Mn(2+).

It catalyses the reaction D-ribose 5-phosphate + uracil = psi-UMP + H2O. Catalyzes the reversible cleavage of pseudouridine 5'-phosphate (PsiMP) to ribose 5-phosphate and uracil. Functions biologically in the cleavage direction, as part of a pseudouridine degradation pathway. The polypeptide is Pseudouridine-5'-phosphate glycosidase (Legionella pneumophila subsp. pneumophila (strain Philadelphia 1 / ATCC 33152 / DSM 7513)).